The sequence spans 392 residues: Olfactomedin-like protein 3 (392 aa).

Positions 1–21 (MGPWRCLLLLPLLAAAPRAQQ) are cleaved as a signal peptide. A coiled-coil region spans residues 25 to 99 (MEYVERRLAL…REVDYLETQN (75 aa)). An Olfactomedin-like domain is found at 132–388 (DCSDTIASVR…QIIYRMEMKK (257 aa)). Cys133 and Cys315 are joined by a disulfide. 2 N-linked (GlcNAc...) asparagine glycosylation sites follow: Asn175 and Asn235.

This sequence belongs to the OLFML3 family.

Its subcellular location is the secreted. In terms of biological role, secreted scaffold protein that plays an essential role in dorsoventral patterning during early development. Stabilizes axial formation by restricting chordin (CHRD) activity on the dorsal side. Acts by facilitating the association between the tolloid proteases and their substrate chordin (CHRD), leading to enhance chordin (CHRD) degradation. In Gallus gallus (Chicken), this protein is Olfactomedin-like protein 3 (OLFML3).